The primary structure comprises 195 residues: Imidazoleglycerol-phosphate dehydratase (195 aa).

This sequence belongs to the imidazoleglycerol-phosphate dehydratase family.

It localises to the cytoplasm. The catalysed reaction is D-erythro-1-(imidazol-4-yl)glycerol 3-phosphate = 3-(imidazol-4-yl)-2-oxopropyl phosphate + H2O. It functions in the pathway amino-acid biosynthesis; L-histidine biosynthesis; L-histidine from 5-phospho-alpha-D-ribose 1-diphosphate: step 6/9. The chain is Imidazoleglycerol-phosphate dehydratase from Polynucleobacter necessarius subsp. necessarius (strain STIR1).